Reading from the N-terminus, the 396-residue chain is 1-deoxy-D-xylulose 5-phosphate reductoisomerase (396 aa).

NADPH-binding residues include Thr-10, Gly-11, Ser-12, Ile-13, and Asn-123. Residue Lys-124 participates in 1-deoxy-D-xylulose 5-phosphate binding. Glu-125 is a binding site for NADPH. Residue Asp-149 participates in Mn(2+) binding. Ser-150, Glu-151, Ser-185, and His-208 together coordinate 1-deoxy-D-xylulose 5-phosphate. Glu-151 is a binding site for Mn(2+). Residue Gly-214 coordinates NADPH. 4 residues coordinate 1-deoxy-D-xylulose 5-phosphate: Ser-221, Asn-226, Lys-227, and Glu-230. Residue Glu-230 coordinates Mn(2+).

Belongs to the DXR family. Mg(2+) serves as cofactor. It depends on Mn(2+) as a cofactor.

It catalyses the reaction 2-C-methyl-D-erythritol 4-phosphate + NADP(+) = 1-deoxy-D-xylulose 5-phosphate + NADPH + H(+). It functions in the pathway isoprenoid biosynthesis; isopentenyl diphosphate biosynthesis via DXP pathway; isopentenyl diphosphate from 1-deoxy-D-xylulose 5-phosphate: step 1/6. Its function is as follows. Catalyzes the NADPH-dependent rearrangement and reduction of 1-deoxy-D-xylulose-5-phosphate (DXP) to 2-C-methyl-D-erythritol 4-phosphate (MEP). The chain is 1-deoxy-D-xylulose 5-phosphate reductoisomerase from Shewanella sp. (strain ANA-3).